A 225-amino-acid polypeptide reads, in one-letter code: Uracil-DNA glycosylase (225 aa).

Residue Asp-65 is the Proton acceptor of the active site.

This sequence belongs to the uracil-DNA glycosylase (UDG) superfamily. UNG family.

The protein localises to the cytoplasm. It carries out the reaction Hydrolyzes single-stranded DNA or mismatched double-stranded DNA and polynucleotides, releasing free uracil.. Functionally, excises uracil residues from the DNA which can arise as a result of misincorporation of dUMP residues by DNA polymerase or due to deamination of cytosine. The polypeptide is Uracil-DNA glycosylase (Bacillus thuringiensis (strain Al Hakam)).